The sequence spans 111 residues: Propane 2-monooxygenase, effector component (111 aa).

This sequence belongs to the TmoD/XamoD family. In terms of assembly, the propane 2-monooxygenase multicomponent enzyme system is composed of an electron transfer component and a monooxygenase component interacting with the effector protein PrmD. The electron transfer component is composed of a reductase (PrmB), and the monooxygenase component is formed by a large subunit (PrmA) and a small subunit (PrmC).

In terms of biological role, effector component of the propane 2-monooxygenase multicomponent enzyme system which is involved in the degradation of propane via the O2-dependent hydroxylation of propane. The chain is Propane 2-monooxygenase, effector component from Gordonia sp. (strain TY-5).